Reading from the N-terminus, the 175-residue chain is Putative transmembrane protein ORF175 (175 aa).

A run of 4 helical transmembrane segments spans residues Leu14–Met34, Val58–Phe78, Ile101–Phe121, and Ile142–Ile162.

It localises to the host membrane. This Acidianus two-tailed virus (ATV) protein is Putative transmembrane protein ORF175.